The primary structure comprises 247 residues: 1-(5-phosphoribosyl)-5-[(5-phosphoribosylamino)methylideneamino] imidazole-4-carboxamide isomerase 1 (247 aa).

Glu8 functions as the Proton acceptor in the catalytic mechanism. The active-site Proton donor is Asp128.

It belongs to the HisA/HisF family.

It is found in the cytoplasm. It catalyses the reaction 1-(5-phospho-beta-D-ribosyl)-5-[(5-phospho-beta-D-ribosylamino)methylideneamino]imidazole-4-carboxamide = 5-[(5-phospho-1-deoxy-D-ribulos-1-ylimino)methylamino]-1-(5-phospho-beta-D-ribosyl)imidazole-4-carboxamide. It participates in amino-acid biosynthesis; L-histidine biosynthesis; L-histidine from 5-phospho-alpha-D-ribose 1-diphosphate: step 4/9. This Ruegeria sp. (strain TM1040) (Silicibacter sp.) protein is 1-(5-phosphoribosyl)-5-[(5-phosphoribosylamino)methylideneamino] imidazole-4-carboxamide isomerase 1.